Reading from the N-terminus, the 86-residue chain is Photosystem I reaction center subunit PsaK 1 (86 aa).

The next 2 membrane-spanning stretches (helical) occupy residues 14–34 and 61–81; these read LSWS…AIAF and AVLG…LGLA.

It belongs to the PsaG/PsaK family.

It localises to the cellular thylakoid membrane. In Synechocystis sp. (strain ATCC 27184 / PCC 6803 / Kazusa), this protein is Photosystem I reaction center subunit PsaK 1 (psaK1).